The primary structure comprises 519 residues: Probable cytosol aminopeptidase (519 aa).

Residues K283 and D288 each coordinate Mn(2+). K295 is a catalytic residue. Mn(2+) contacts are provided by D306, D365, and E367. R369 is a catalytic residue.

The protein belongs to the peptidase M17 family. Mn(2+) serves as cofactor.

The protein localises to the cytoplasm. It carries out the reaction Release of an N-terminal amino acid, Xaa-|-Yaa-, in which Xaa is preferably Leu, but may be other amino acids including Pro although not Arg or Lys, and Yaa may be Pro. Amino acid amides and methyl esters are also readily hydrolyzed, but rates on arylamides are exceedingly low.. The enzyme catalyses Release of an N-terminal amino acid, preferentially leucine, but not glutamic or aspartic acids.. Presumably involved in the processing and regular turnover of intracellular proteins. Catalyzes the removal of unsubstituted N-terminal amino acids from various peptides. The polypeptide is Probable cytosol aminopeptidase (Mycobacterium marinum (strain ATCC BAA-535 / M)).